Consider the following 465-residue polypeptide: 3-isopropylmalate dehydratase large subunit (465 aa).

[4Fe-4S] cluster-binding residues include C347, C407, and C410. Residues 416–443 (DTLRPGERSASTSNRNFEGRQGPGGRTH) form a disordered region.

This sequence belongs to the aconitase/IPM isomerase family. LeuC type 1 subfamily. Heterodimer of LeuC and LeuD. It depends on [4Fe-4S] cluster as a cofactor.

The catalysed reaction is (2R,3S)-3-isopropylmalate = (2S)-2-isopropylmalate. The protein operates within amino-acid biosynthesis; L-leucine biosynthesis; L-leucine from 3-methyl-2-oxobutanoate: step 2/4. Its function is as follows. Catalyzes the isomerization between 2-isopropylmalate and 3-isopropylmalate, via the formation of 2-isopropylmaleate. The protein is 3-isopropylmalate dehydratase large subunit of Frankia alni (strain DSM 45986 / CECT 9034 / ACN14a).